Here is a 532-residue protein sequence, read N- to C-terminus: MVSINSGPISSFVSRYSMIDSDTLLHLSSFGSTFNPNYKAKACIRFARKVCGSTVLGFLEVKPRKKSCCSRCNGVSRMCNKRNLGWDSEGSKDLETEILEFMKNSEKPGMFPSKKDLIRSGRFDLVERIVNQGGWLSMGWDLDEQEEKVRVNENVTPQDLHIEKQLPNCNSPEMDKTLNHGDLDLSSNLSSSTEQVESRNDSGIEGILTRLEKERNLSLGISVRENGKSNGAMHDISPNGSVPWSSRIVTASEIQEVDGSRGSGEYAQSRYQGAKSVSGKPGLSDSPTSETWRTWSMRRAGFTDEDFEAAEISSSGLTGVKKDDTKKDSGDSMNGKDRIASSSEDVNKTHIKHRLQQLQSELSSVLHSLRSPPDKVVTSKDSETTAGNLENLSDDWEYKENEIIHAQNKLRSTRAKLAVLEGKMAMAIIDAQRIVREKQRRIDHASRALRLLRTASIVWPNSASEVLLTGSFDGWSTQRKMKKAENGVFSLSLKLYPGKYEIKFIVDGQWKVDPLRPIVTSGGYENNLLIIS.

The transit peptide at 1 to 71 directs the protein to the chloroplast; sequence MVSINSGPIS…KPRKKSCCSR (71 aa). Disordered stretches follow at residues 165–201, 256–292, 314–347, and 367–388; these read QLPN…SRND, EVDG…SETW, SSGL…EDVN, and HSLR…TAGN. A compositionally biased stretch (basic and acidic residues) spans 173–183; the sequence is EMDKTLNHGDL. Basic and acidic residues predominate over residues 320–339; it reads VKKDDTKKDSGDSMNGKDRI. Residues 389–454 are a coiled coil; that stretch reads LENLSDDWEY…ASRALRLLRT (66 aa).

As to quaternary structure, interacts with PTST3 and SS4. Interacts with MFP1; the interaction is essential for the initiation of starch granules biosynthesis in leaf chloroplasts, for the correct location of the process in the stromal spaces between the thylakoid membranes, and for the association of this protein with the thylakoid membranes. Interacts with PII1/MRC; the interaction is essential for the initiation of starch granules biosynthesis in leaf chloroplasts.

The protein localises to the plastid. The protein resides in the chloroplast. It is found in the chloroplast thylakoid membrane. Its function is as follows. Involved in starch granule initiation in leaf chloroplasts. Binds and delivers suitable maltooligosaccharide substrates to starch synthase 4 (SS4). The chain is Protein PTST homolog 2, chloroplastic from Arabidopsis thaliana (Mouse-ear cress).